An 800-amino-acid polypeptide reads, in one-letter code: Phenylalanine--tRNA ligase beta subunit (800 aa).

Positions 39-152 (AAGLSKIVVG…EDAVPGEEVF (114 aa)) constitute a tRNA-binding domain. The B5 domain occupies 405–480 (TSDVEVSSTL…RIYGYDRLPT (76 aa)). Positions 458, 464, 467, and 468 each coordinate Mg(2+). Residues 707–800 (TKFPAVSRDV…LEEKVNAEVR (94 aa)) form the FDX-ACB domain.

It belongs to the phenylalanyl-tRNA synthetase beta subunit family. Type 1 subfamily. Tetramer of two alpha and two beta subunits. Requires Mg(2+) as cofactor.

The protein localises to the cytoplasm. It carries out the reaction tRNA(Phe) + L-phenylalanine + ATP = L-phenylalanyl-tRNA(Phe) + AMP + diphosphate + H(+). The chain is Phenylalanine--tRNA ligase beta subunit from Streptococcus pneumoniae (strain ATCC BAA-255 / R6).